Reading from the N-terminus, the 133-residue chain is Small ribosomal subunit protein eS8 (133 aa).

The interval 1 to 22 is disordered; that stretch reads MGFYQGPDNRKITGGLKGKHRD.

The protein belongs to the eukaryotic ribosomal protein eS8 family. Part of the 30S ribosomal subunit.

This is Small ribosomal subunit protein eS8 from Saccharolobus islandicus (strain M.14.25 / Kamchatka #1) (Sulfolobus islandicus).